The chain runs to 144 residues: Protein MIX23 (144 aa).

N-acetylalanine is present on Ala2. The stretch at 82–120 forms a coiled coil; sequence VKSLREEREKNLDDLTLLKRLRKEQTKLKWMQSELNVEE. Residue Lys100 is modified to N6-acetyllysine.

The protein belongs to the MIX23 family.

The sequence is that of Protein MIX23 from Mus musculus (Mouse).